The following is a 336-amino-acid chain: Abasic site processing protein HMCES (336 aa).

Cysteine 2 (nucleophile) is an active-site residue. The residue at position 2 (cysteine 2) is a Thiazolidine linkage to a ring-opened DNA abasic site. Basic and acidic residues predominate over residues 29-38 (QPEWLREGRY). The tract at residues 29–52 (QPEWLREGRYRPSYNKGPQSSGPV) is disordered. The active site involves glutamate 127. The interval 283-336 (LKSSQEGSPQKKEDTLPRWKSQFIHSPSPKKSSAGILRQWLGQEGGPPAKKQKA) is disordered.

It belongs to the SOS response-associated peptidase family.

It localises to the chromosome. Its activity is regulated as follows. Formation and reversal of DNA-protein cross-link depends on DNA context. Catalyzes formation of the thiazolidine linkage in presence of abasic sites in single-stranded DNA. Mediates the reversal of the thiazolidine cross-link in presence of double stranded DNA. Sensor of abasic sites in single-stranded DNA (ssDNA) required to preserve genome integrity by promoting error-free repair of abasic sites. Acts as an enzyme that recognizes and binds abasic sites in ssDNA at replication forks and chemically modifies the lesion by forming a covalent cross-link with DNA: forms a stable thiazolidine linkage between a ring-opened abasic site and the alpha-amino and sulfhydryl substituents of its N-terminal catalytic cysteine residue. The HMCES DNA-protein cross-link is then either reversed or degraded. HMCES is able to catalyze the reversal of its thiazolidine cross-link and cycle between a cross-link and a non-cross-linked state depending on DNA context: mediates self-reversal of the thiazolidine cross-link in double stranded DNA, allowing APEX1 to initiate downstream repair of abasic sites. The HMCES DNA-protein cross-link can also be degraded by the SPRTN metalloprotease following unfolding by the BRIP1/FANCJ helicase. Promotes error-free repair of abasic sites by protecting abasic sites from translesion synthesis (TLS) polymerases and endonucleases that are error-prone and would generate mutations and double-strand breaks. Acts as a protease: mediates autocatalytic processing of its N-terminal methionine in order to expose the catalytic cysteine. The HMCES DNA-protein cross-link is then either reversed or degraded. According to a model, the HMCES DNA-protein cross-link. In Gallus gallus (Chicken), this protein is Abasic site processing protein HMCES.